Consider the following 416-residue polypeptide: L-cysteine:1D-myo-inositol 2-amino-2-deoxy-alpha-D-glucopyranoside ligase (416 aa).

Cys-45 lines the Zn(2+) pocket. L-cysteinyl-5'-AMP-binding positions include 45–48 (CGIT), Thr-60, and 83–85 (NVT). The 'HIGH' region signature appears at 47–57 (ITPYDSTHLGH). The 'ERGGDP' region motif lies at 191-196 (ERGGDP). Trp-232 is a binding site for L-cysteinyl-5'-AMP. Position 236 (Cys-236) interacts with Zn(2+). 254-256 (GSD) is an L-cysteinyl-5'-AMP binding site. A Zn(2+)-binding site is contributed by His-261. Position 286 (Val-286) interacts with L-cysteinyl-5'-AMP. Residues 292-296 (KMSKS) carry the 'KMSKS' region motif.

It belongs to the class-I aminoacyl-tRNA synthetase family. MshC subfamily. In terms of assembly, monomer. It depends on Zn(2+) as a cofactor.

It catalyses the reaction 1D-myo-inositol 2-amino-2-deoxy-alpha-D-glucopyranoside + L-cysteine + ATP = 1D-myo-inositol 2-(L-cysteinylamino)-2-deoxy-alpha-D-glucopyranoside + AMP + diphosphate + H(+). Catalyzes the ATP-dependent condensation of GlcN-Ins and L-cysteine to form L-Cys-GlcN-Ins. This chain is L-cysteine:1D-myo-inositol 2-amino-2-deoxy-alpha-D-glucopyranoside ligase, found in Brachybacterium faecium (strain ATCC 43885 / DSM 4810 / JCM 11609 / LMG 19847 / NBRC 14762 / NCIMB 9860 / 6-10).